The following is a 537-amino-acid chain: Putative cysteine ligase BshC (537 aa).

Belongs to the BshC family.

Functionally, involved in bacillithiol (BSH) biosynthesis. May catalyze the last step of the pathway, the addition of cysteine to glucosamine malate (GlcN-Mal) to generate BSH. The chain is Putative cysteine ligase BshC from Staphylococcus saprophyticus subsp. saprophyticus (strain ATCC 15305 / DSM 20229 / NCIMB 8711 / NCTC 7292 / S-41).